We begin with the raw amino-acid sequence, 462 residues long: Sensor histidine kinase RegB (462 aa).

Over 1-25 (MILGPDGILNRDTRGDWWRLRTLIL) the chain is Cytoplasmic. Residues 26–45 (LRWMAVAGQLAAIVVTDWYL) form a helical membrane-spanning segment. Residues 46–51 (GVRLPM) lie on the Extracellular side of the membrane. A helical transmembrane segment spans residues 52-70 (GLCFMAVGASVIANVIATF). Topologically, residues 71–78 (VFPQNRRL) are cytoplasmic. The helical transmembrane segment at 79–96 (TEFQALMILLFDLTQLSF) threads the bilayer. Residues 97-103 (LLFLTGG) are Extracellular-facing. Residues 104–123 (LTNPFALLILAPVTISGVAL) traverse the membrane as a helical segment. Over 124 to 129 (DVRTTV) the chain is Cytoplasmic. The chain crosses the membrane as a helical span at residues 130-149 (ILGAIAIGLLTFTAYFHLPL). The Extracellular segment spans residues 150–164 (ILADGSSLSVPRMFE). A helical membrane pass occupies residues 165–182 (FGFWLAIVIGILFLGLYS). Residues 183–462 (RRVAIEIRSM…PLGENVLIQT (280 aa)) lie on the Cytoplasmic side of the membrane. A Histidine kinase domain is found at 218-445 (AAAHELGTPL…IVEVIWPVDR (228 aa)). Position 221 is a phosphohistidine; by autocatalysis (H221).

The protein resides in the cell inner membrane. It carries out the reaction ATP + protein L-histidine = ADP + protein N-phospho-L-histidine.. Member of the two-component regulatory system RegB/RegA. Involved in the positive regulation of photosynthesis gene expression in response to anaerobiosis. Also involved in positive regulation of the cbbI and cbbII Calvin cycle CO2 fixation operons, as well as in regulation of expression of genes involved in alternative CO2 fixation pathways. Phosphorylates RegA/PrrA. This Cereibacter sphaeroides (Rhodobacter sphaeroides) protein is Sensor histidine kinase RegB (regB).